The primary structure comprises 416 residues: Bifunctional protein GlmU (416 aa).

A pyrophosphorylase region spans residues 1 to 229 (MTNYAIILAA…FNESLGVNDR (229 aa)). UDP-N-acetyl-alpha-D-glucosamine is bound by residues 8–11 (LAAG), Lys22, Gln72, and 77–78 (GT). A Mg(2+)-binding site is contributed by Asp102. Gly139, Glu154, Asn169, and Asn227 together coordinate UDP-N-acetyl-alpha-D-glucosamine. Asn227 lines the Mg(2+) pocket. The interval 230 to 250 (VALATAETVMRQRITQKHMVN) is linker. An N-acetyltransferase region spans residues 251–416 (GVTFQNPETV…DSHCTFGSWR (166 aa)). UDP-N-acetyl-alpha-D-glucosamine is bound by residues Arg332 and Lys350. The active-site Proton acceptor is the His362. Residues Tyr365 and Asn376 each contribute to the UDP-N-acetyl-alpha-D-glucosamine site. Residues Ala379 and 385 to 386 (NY) contribute to the acetyl-CoA site.

This sequence in the N-terminal section; belongs to the N-acetylglucosamine-1-phosphate uridyltransferase family. It in the C-terminal section; belongs to the transferase hexapeptide repeat family. Homotrimer. Requires Mg(2+) as cofactor.

The protein localises to the cytoplasm. The enzyme catalyses alpha-D-glucosamine 1-phosphate + acetyl-CoA = N-acetyl-alpha-D-glucosamine 1-phosphate + CoA + H(+). It carries out the reaction N-acetyl-alpha-D-glucosamine 1-phosphate + UTP + H(+) = UDP-N-acetyl-alpha-D-glucosamine + diphosphate. The protein operates within nucleotide-sugar biosynthesis; UDP-N-acetyl-alpha-D-glucosamine biosynthesis; N-acetyl-alpha-D-glucosamine 1-phosphate from alpha-D-glucosamine 6-phosphate (route II): step 2/2. Its pathway is nucleotide-sugar biosynthesis; UDP-N-acetyl-alpha-D-glucosamine biosynthesis; UDP-N-acetyl-alpha-D-glucosamine from N-acetyl-alpha-D-glucosamine 1-phosphate: step 1/1. It functions in the pathway bacterial outer membrane biogenesis; LPS lipid A biosynthesis. Functionally, catalyzes the last two sequential reactions in the de novo biosynthetic pathway for UDP-N-acetylglucosamine (UDP-GlcNAc). The C-terminal domain catalyzes the transfer of acetyl group from acetyl coenzyme A to glucosamine-1-phosphate (GlcN-1-P) to produce N-acetylglucosamine-1-phosphate (GlcNAc-1-P), which is converted into UDP-GlcNAc by the transfer of uridine 5-monophosphate (from uridine 5-triphosphate), a reaction catalyzed by the N-terminal domain. The protein is Bifunctional protein GlmU of Streptococcus pyogenes serotype M12 (strain MGAS2096).